Reading from the N-terminus, the 270-residue chain is Putative pyruvate, phosphate dikinase regulatory protein (270 aa).

151 to 158 (GVSRTSKT) is a binding site for ADP.

It belongs to the pyruvate, phosphate/water dikinase regulatory protein family. PDRP subfamily.

The enzyme catalyses N(tele)-phospho-L-histidyl/L-threonyl-[pyruvate, phosphate dikinase] + ADP = N(tele)-phospho-L-histidyl/O-phospho-L-threonyl-[pyruvate, phosphate dikinase] + AMP + H(+). The catalysed reaction is N(tele)-phospho-L-histidyl/O-phospho-L-threonyl-[pyruvate, phosphate dikinase] + phosphate + H(+) = N(tele)-phospho-L-histidyl/L-threonyl-[pyruvate, phosphate dikinase] + diphosphate. Functionally, bifunctional serine/threonine kinase and phosphorylase involved in the regulation of the pyruvate, phosphate dikinase (PPDK) by catalyzing its phosphorylation/dephosphorylation. This Ligilactobacillus salivarius (strain UCC118) (Lactobacillus salivarius) protein is Putative pyruvate, phosphate dikinase regulatory protein.